A 173-amino-acid polypeptide reads, in one-letter code: MPRSQKNDNFIDKTFTVLADIVLKILPTSKEEKEAFSYYRDGMSAQSEGEYAEALENYYEALKLEEDPYDRSYILYNIGLIYASNGEYVKALEYYHQGLELNFKLPQALNNIAVIYHYQGVQAIEDKDTELSKLMFDKAAQYWQQAIKLAPDNYIEAQNWLKTTGRMRNIQGY.

3 TPR repeats span residues 35-68 (AFSYYRDGMSAQSEGEYAEALENYYEALKLEEDP), 72-105 (SYILYNIGLIYASNGEYVKALEYYHQGLELNFKL), and 120-153 (GVQAIEDKDTELSKLMFDKAAQYWQQAIKLAPDN).

It belongs to the Ycf3 family.

The protein localises to the plastid. Its subcellular location is the chloroplast thylakoid membrane. In terms of biological role, essential for the assembly of the photosystem I (PSI) complex. May act as a chaperone-like factor to guide the assembly of the PSI subunits. The sequence is that of Photosystem I assembly protein Ycf3 from Pyropia yezoensis (Susabi-nori).